The following is a 29-amino-acid chain: Kappa-sparatoxin-Hv1e (29 aa).

3 cysteine pairs are disulfide-bonded: Cys3-Cys17, Cys10-Cys22, and Cys16-Cys26.

In terms of tissue distribution, expressed by the venom gland.

It localises to the secreted. In terms of biological role, inhibitor of voltage-gated potassium channels of the Kv4/KCND family. Blocks calcium channels (Cav). This chain is Kappa-sparatoxin-Hv1e, found in Heteropoda venatoria (Brown huntsman spider).